The chain runs to 229 residues: CRISPR pre-crRNA endoribonuclease Cas5d (229 aa).

The protein belongs to the CRISPR-associated protein Cas5 family. Subtype I-C/Dvulg subfamily. The cofactor is Does not require a metal cofactor..

Its function is as follows. CRISPR (clustered regularly interspaced short palindromic repeat) is an adaptive immune system that provides protection against mobile genetic elements (viruses, transposable elements and conjugative plasmids). CRISPR clusters contain spacers, sequences complementary to antecedent mobile elements, and target invading nucleic acids. CRISPR clusters are transcribed and processed into CRISPR RNA (crRNA). This protein is a sequence-specific endonuclease that cleaves pre-crRNA into mature crRNA, possibly by an intramolecular attack of the 2'-hydroxyl group of G26 on the scissile phosphodiester, cutting the precursor 3' to G26 residue yielding 5'-hydroxyl and 2' and/or 3' ends lacking a hydroxyl group (perhaps a 2'/3' cyclic phosphodiester). Requires between 4 and 8 nt downstream of the cleavage site for both binding and cleavage of pre-crRNA. Substitution with dG at this position abolishes cleavage but not RNA binding. Does not cleave pre-crRNA associated with the M.succiniciproducens strain MBEL55E Cas5 protein (AC Q65TW5) CRISPR locus. This chain is CRISPR pre-crRNA endoribonuclease Cas5d, found in Thermus thermophilus (strain ATCC BAA-163 / DSM 7039 / HB27).